A 135-amino-acid chain; its full sequence is Large ribosomal subunit protein mL61 (135 aa).

Positions 114–129 (HHESSPENIKEAHKQD) are enriched in basic and acidic residues. Positions 114–135 (HHESSPENIKEAHKQDYSPPSN) are disordered.

This sequence belongs to the mitochondrion-specific ribosomal protein mL61 family. As to quaternary structure, component of the mitochondrial large ribosomal subunit (mt-LSU). Mature yeast 74S mitochondrial ribosomes consist of a small (37S) and a large (54S) subunit. The 37S small subunit contains a 15S ribosomal RNA (15S mt-rRNA) and at least 32 different proteins. The 54S large subunit contains a 21S rRNA (21S mt-rRNA) and at least 45 different proteins.

It localises to the mitochondrion. Component of the mitochondrial ribosome (mitoribosome), a dedicated translation machinery responsible for the synthesis of mitochondrial genome-encoded proteins, including at least some of the essential transmembrane subunits of the mitochondrial respiratory chain. The mitoribosomes are attached to the mitochondrial inner membrane and translation products are cotranslationally integrated into the membrane. mL61 is not essential in cells grown at 30 degrees Celsius but is required for mitochondrial translation in cells grown at 18 degrees Celsius. This is Large ribosomal subunit protein mL61 (mrp49) from Schizosaccharomyces pombe (strain 972 / ATCC 24843) (Fission yeast).